Here is an 83-residue protein sequence, read N- to C-terminus: Delta-conotoxin-like Ac6.2 (83 aa).

The N-terminal stretch at 1–22 (MKLTCVVIVAVLFLTAWTFVTA) is a signal peptide. Residues 23–51 (DDSRYGLKNLFPKARHEMKNPEASKLNKR) constitute a propeptide that is removed on maturation. Intrachain disulfides connect C54-C69, C61-C73, and C68-C78. 4-hydroxyproline is present on residues P57 and P65.

It belongs to the conotoxin O1 superfamily. As to expression, expressed by the venom duct.

The protein localises to the secreted. Its function is as follows. Delta-conotoxins bind to site 6 of voltage-gated sodium channels (Nav) and inhibit the inactivation process. The sequence is that of Delta-conotoxin-like Ac6.2 from Conus achatinus (Little frog cone).